The following is a 2210-amino-acid chain: Orsellinic acid synthase ArmB (2210 aa).

The N-terminal acylcarrier protein transacylase domain (SAT) stretch occupies residues 38–261 (LLLDACHYAF…HKTTVDALYH (224 aa)). Positions 391-817 (QEPIAICGMS…GSNGALLLEE (427 aa)) constitute a Ketosynthase family 3 (KS3) domain. Residues cysteine 561, histidine 696, and histidine 736 each act as for beta-ketoacyl synthase activity in the active site. The malonyl-CoA:ACP transacylase (MAT) domain stretch occupies residues 915–1240 (VFVFSGQGGQ…GLTLSSSLSQ (326 aa)). Serine 1009 serves as the catalytic For acyl/malonyl transferase activity. Residues 1307–1437 (MLQSWAQFPS…GQFRPLLVVD (131 aa)) form an N-terminal hotdog fold region. A PKS/mFAS DH domain is found at 1307–1614 (MLQSWAQFPS…FKKLRLNTLQ (308 aa)). The tract at residues 1336-1611 (ITGHIVGDVP…GMCFKKLRLN (276 aa)) is product template (PT) domain. The active-site Proton acceptor; for dehydratase activity is histidine 1339. Residues 1464–1614 (AEVFTTRTAY…FKKLRLNTLQ (151 aa)) are C-terminal hotdog fold. Aspartate 1525 functions as the Proton donor; for dehydratase activity in the catalytic mechanism. Residues 1660–1735 (VDVQNTVLNI…ELVREISSTV (76 aa)) enclose the Carrier 1 domain. Residue serine 1694 is modified to O-(pantetheine 4'-phosphoryl)serine. The segment at 1739-1761 (AATAVNTPETASTPEPTLQGDAS) is disordered. A Carrier 2 domain is found at 1845-1922 (SSPSSDLVDT…AVNQYISSKR (78 aa)). Position 1882 is an O-(pantetheine 4'-phosphoryl)serine (serine 1882). Positions 1920 to 1946 (SKRPGKSPKQVEETAMDPDREEDLSDL) are disordered. The span at 1933 to 1944 (TAMDPDREEDLS) shows a compositional bias: acidic residues. The tract at residues 1963-2202 (VPMSVQKSSS…LGAVTQALVD (240 aa)) is thioesterase (TE) domain.

The protein operates within secondary metabolite biosynthesis. Non-reducing polyketide synthase, part of the gene cluster that mediates the biosynthesis of melleolides, a range of antifungal and phytotoxic polyketide derivatives composed of an orsellinic acid (OA) moiety esterified to various sesquiterpene alcohols. The first step in melleolides biosynthesis is performed by the delta(6)-protoilludene synthase PRO1 which catalyzes the cyclization of farnesyl diphosphate to protoilludene. The orsellinic acid synthase armB produces OA by condensing acetyl-CoA with 3 malonyl-CoA units in a three-round chain elongation reaction folowed by a C2-C7 ring closure. ArmB further catalyzes the trans-esterification of OA to the various sesquiterpene alcohols resulting from the hydroxylation of protoilludene. The melleolides cluster also includes 5 cytochrome P450 monooxygenases, 4 NAD(+)-dependent oxidoreductases, one flavin-dependent oxidoreductase, and one O-methyltransferase. The cytochrome P450 monooxygenases may be involved in protoilludene hydroxylation to elaborate melleolides with multiple alcohol groups, such as melleolide D, which carries alcohol functionalities at C-4, C-5, C-10, and C-13. The role of the NAD(+)-dependent enzymes remains unknown. Numerous melleolides, including arnamial, show 5'-O-methylation of the aromatic moiety which may be catalyzed by the methyltransferase encoded in the cluster. The flavin-dependent oxidoreductase might represent the dehydrogenase yielding the aldehyde in position 1 of arnamial and other melleolides. Finally, several halogenase localized outside of the cluster (armH1 to armH5), are able to catalyze the transfer of a single chlorine atom to the melleolide backbone, resulting in a 6'-chloromelleolide product. The chain is Orsellinic acid synthase ArmB from Armillaria ostoyae (Armillaria root rot fungus).